The following is a 239-amino-acid chain: Sugar fermentation stimulation protein homolog (239 aa).

It belongs to the SfsA family.

This is Sugar fermentation stimulation protein homolog from Desulforamulus reducens (strain ATCC BAA-1160 / DSM 100696 / MI-1) (Desulfotomaculum reducens).